The following is a 293-amino-acid chain: MAITAQLVKQLRERTGAGMMDCKKALTETNGDIDAAVDYLREKGIAKAAKKADRIAAEGTTYVASSGNTAVLLELNSETDFVARNEGFQALVKEMADHILATKPADLDALMASEIETGKTVETKLNEAISTIGEKLTLRRFVLAEKTDADAFGEYLHMGGRIGVLAVVENSTDAEAAKDVAMHIAALNPKFVSREQVSAEELEHEKEILKQQALNEGKPENIVEKMVEGRLRKYLEEICAVDQPFVKNPDQTVAEFLKSKGGSLKSFVRYEVGEGIEKRQDNFADEVMGQMGK.

The segment at 79-82 (TDFV) is involved in Mg(2+) ion dislocation from EF-Tu.

This sequence belongs to the EF-Ts family.

It is found in the cytoplasm. Associates with the EF-Tu.GDP complex and induces the exchange of GDP to GTP. It remains bound to the aminoacyl-tRNA.EF-Tu.GTP complex up to the GTP hydrolysis stage on the ribosome. The sequence is that of Elongation factor Ts from Macrococcus caseolyticus (strain JCSC5402) (Macrococcoides caseolyticum).